Here is a 1703-residue protein sequence, read N- to C-terminus: Pecanex-like protein 1 (1703 aa).

2 helical membrane-spanning segments follow: residues 31–53 and 57–74; these read VNAL…YMAL and MVIV…FLLL. Over residues 91–100 the composition is skewed to basic and acidic residues; it reads VEHQTRESKG. Residues 91–126 form a disordered region; sequence VEHQTRESKGSRGGTGGANDPVTRREDSNGLGDPGG. A glycan (N-linked (GlcNAc...) asparagine) is linked at asparagine 256. 3 consecutive transmembrane segments (helical) span residues 416-438, 477-499, and 525-547; these read VLAV…HGFF, AYSR…YGSL, and LVIV…QVNT. Asparagine 564 carries an N-linked (GlcNAc...) asparagine glycan. 4 consecutive transmembrane segments (helical) span residues 569–591, 603–622, 675–697, and 704–721; these read LLSA…CFCY, IPVL…YHLS, LIVC…FIAL, and VLYG…YLLP. N-linked (GlcNAc...) asparagine glycans are attached at residues asparagine 988, asparagine 1129, and asparagine 1391. Disordered regions lie at residues 1475-1556 and 1577-1598; these read VQSG…HSIP and TDPL…PTHA. Composition is skewed to low complexity over residues 1485–1510 and 1518–1556; these read ARAS…RTST and RSST…HSIP. Basic residues predominate over residues 1582–1591; that stretch reads QHHHPHHHPQ. Residue asparagine 1622 is glycosylated (N-linked (GlcNAc...) asparagine).

Belongs to the pecanex family.

The protein resides in the membrane. The polypeptide is Pecanex-like protein 1 (Takifugu rubripes (Japanese pufferfish)).